A 1017-amino-acid polypeptide reads, in one-letter code: Voltage-gated delayed rectifier potassium channel KCNH4 (1017 aa).

Residues 1–228 (MPVMKGLLAP…LLHYSVSKAI (228 aa)) are Cytoplasmic-facing. In terms of domain architecture, PAS spans 14–90 (FLDTIATRFD…QRLHKALEGH (77 aa)). The PAC domain maps to 93 to 145 (HRAEICFYRKDGSAFWCLLDMMPIKNEMGEVVLFLFSFKDITQSGSPGLGPQG). A disordered region spans residues 138–157 (SPGLGPQGGRGDSNHENSLG). Gly residues predominate over residues 139 to 148 (PGLGPQGGRG). Residues 229 to 249 (WDGLILLATFYVAVTVPYNVC) traverse the membrane as a helical segment. Residues 250-259 (FSGDDDTPIT) are Extracellular-facing. A helical membrane pass occupies residues 260 to 280 (SRHTLVSDIAVEMLFILDIIL). Residues 281 to 302 (NFRTTYVSQSGQVISAPRSIGL) lie on the Cytoplasmic side of the membrane. A helical transmembrane segment spans residues 303–323 (HYLATWFFIDLIAALPFDLLY). Over 324 to 332 (IFNITVTSL) the chain is Extracellular. N-linked (GlcNAc...) asparagine glycosylation is present at Asn326. Residues 333 to 353 (VHLLKTVRLLRLLRLLQKLER) traverse the membrane as a helical; Voltage-sensor segment. At 354-361 (YSQCSAVV) the chain is on the cytoplasmic side. The chain crosses the membrane as a helical span at residues 362-382 (LTLLMSVFALLAHWMACIWYV). Topologically, residues 383-427 (IGRREMEANDPLLWDIGWLHELGKRLEVPYVNGSVGGPSRRSAYI) are extracellular. Asn414 carries N-linked (GlcNAc...) asparagine glycosylation. An intramembrane region (pore-forming) is located at residues 428-448 (AALYFTLSSLTSVGFGNVCAN). The short motif at 439–444 (SVGFGN) is the Selectivity filter element. At 449–482 (TDAEKIFSICTMLIGALMHAVVFGNVTAIIQRMY) the chain is on the extracellular side. N-linked (GlcNAc...) asparagine glycosylation is present at Asn473. Residues 483–503 (SRRSLYHSRMKDLKDFIRVHR) form a helical membrane-spanning segment. At 504–1017 (LPRPLKQRML…SFQSRSDTFH (514 aa)) the chain is on the cytoplasmic side. Positions 556–620 (LFGAASRGCL…AILGKGDLIG (65 aa)) are cNMP-binding domain. Residues 691-724 (GSDTSGLSRFSRSPRLSQPRSESLGSSSDKTLPS) are compositionally biased toward polar residues. 4 disordered regions span residues 691 to 749 (GSDT…LPNL), 772 to 803 (LVSSPSLSPSLSPALAGQGHSASPHGPPRCSA), 821 to 875 (PDLS…EAEE), and 971 to 1017 (LLDL…DTFH). A compositionally biased stretch (low complexity) spans 772-787 (LVSSPSLSPSLSPALA). Pro residues predominate over residues 978-1002 (ILPPYPSEPDPLGPSPVPEASPPTP). A compositionally biased stretch (polar residues) spans 1008–1017 (SFQSRSDTFH).

The protein belongs to the potassium channel family. H (Eag) (TC 1.A.1.20) subfamily. Kv12.3/KCNH4 sub-subfamily. As to quaternary structure, the potassium channel is probably composed of a homo- or heterotetrameric complex of pore-forming alpha subunits that can associate with modulating beta subunits. As to expression, detected only in brain, in particular in the telencephalon. Detected in putamen and caudate nucleus, and at lower levels in cerebral cortex, occipital and hippocampus.

The protein localises to the membrane. The enzyme catalyses K(+)(in) = K(+)(out). Its function is as follows. Pore-forming (alpha) subunit of a voltage-gated delayed rectifier. Activates at more negative voltages, exhibits fast prepulse-independent activation kinetics and deactivates much more slowly, but shows no inactivation. In Homo sapiens (Human), this protein is Voltage-gated delayed rectifier potassium channel KCNH4.